Here is a 244-residue protein sequence, read N- to C-terminus: Ribosomal RNA small subunit methyltransferase G (244 aa).

S-adenosyl-L-methionine-binding positions include Gly79, Phe84, 102–104 (DST), 130–131 (AE), and Arg149. The segment at 225–244 (DRYPRREGVPNQQPLFWSAK) is disordered. The span at 234 to 244 (PNQQPLFWSAK) shows a compositional bias: polar residues.

It belongs to the methyltransferase superfamily. RNA methyltransferase RsmG family.

Its subcellular location is the cytoplasm. Functionally, specifically methylates the N7 position of a guanine in 16S rRNA. This is Ribosomal RNA small subunit methyltransferase G from Deinococcus deserti (strain DSM 17065 / CIP 109153 / LMG 22923 / VCD115).